The following is a 118-amino-acid chain: Putative pterin-4-alpha-carbinolamine dehydratase (118 aa).

This sequence belongs to the pterin-4-alpha-carbinolamine dehydratase family.

It catalyses the reaction (4aS,6R)-4a-hydroxy-L-erythro-5,6,7,8-tetrahydrobiopterin = (6R)-L-erythro-6,7-dihydrobiopterin + H2O. The protein is Putative pterin-4-alpha-carbinolamine dehydratase of Pseudomonas fluorescens (strain ATCC BAA-477 / NRRL B-23932 / Pf-5).